Reading from the N-terminus, the 462-residue chain is uncharacterized protein (462 aa).

WD repeat units lie at residues 170 to 209 (GGERPIAIVRFSNNGNHFASGSWGGQVKVWNSDNLSEVQL), 212 to 260 (GHTD…PLLR), 263 to 302 (GHLARVGRVAFHPSGDYLVSASFDTTWRLWDVHTGVELLM), 305 to 344 (GHSEGIFSIACQPDGSLVSSGGNDAIGRIWDLRSGKSIMV), 347 to 386 (EHIRQIVAMAWSPNGYQLATSSADDTVKIWDLRKVSLAHT), 389 to 430 (AHSS…LIKS), and 433 to 462 (GHEEKVMSVDGYGDRFISSGYDRTIKLWYP).

It is found in the cytoplasm. This is an uncharacterized protein from Schizosaccharomyces pombe (strain 972 / ATCC 24843) (Fission yeast).